The sequence spans 144 residues: MNFKYIVAVSFLIASAYARSVKNDEQSLSQRDVLDEESLREIRGIGGALLSAGKSALKGLAKGLAEHFANGKRTAEDHEVMKRLEAVMRDLDSLDHPEEASERETRGFNQEEIANRFTKKEKRILGPVLGLVSNALGGLLKNLG.

A signal peptide spans 1-18; that stretch reads MNFKYIVAVSFLIASAYA. The propeptide occupies 19–43; sequence RSVKNDEQSLSQRDVLDEESLREIR. Asn70 carries the post-translational modification Asparagine amide. The propeptide occupies 74–123; the sequence is TAEDHEVMKRLEAVMRDLDSLDHPEEASERETRGFNQEEIANRFTKKEKR. Leu143 carries the leucine amide modification.

The protein belongs to the bombinin family. In terms of tissue distribution, expressed by the skin glands.

It localises to the secreted. In terms of biological role, maximin-6 shows antimicrobial activity against bacteria and against the fungus C.albicans. It has little hemolytic activity. Functionally, maximin-H10 shows antimicrobial activity against bacteria and against the fungus C.albicans. Shows strong hemolytic activity. The sequence is that of Maximins 6/H10 from Bombina maxima (Giant fire-bellied toad).